Consider the following 34-residue polypeptide: AGSKSRSRSRSRSRSKSPAKSASPKSAASPRASR.

The segment covering 1–17 has biased composition (basic residues); it reads AGSKSRSRSRSRSRSKS. A disordered region spans residues 1–34; that stretch reads AGSKSRSRSRSRSRSKSPAKSASPKSAASPRASR. 7 consecutive repeat copies span residues 3–4, 5–6, 7–8, 9–10, 11–12, 13–14, and 15–16. The 7 X 2 AA tandem repeats of S-[KR] stretch occupies residues 3–16; the sequence is SKSRSRSRSRSRSK. The span at 18–34 shows a compositional bias: low complexity; sequence PAKSASPKSAASPRASR.

As to expression, sperm.

Its subcellular location is the nucleus. The protein is Sperm protein EM1 of Ensis minor (Razor shell).